The following is a 302-amino-acid chain: MAMTDSNPTRCGYVAIVGRPNVGKSTLLNHILGQKLAITSRKPQTTRHNMLGIKTEGDVQAIYVDTPGMHKANDKALNRYMNRNASAALKDVDVVIFVVDRTKWTDEDQLVLERVQYVTGPLIIAVNKTDRMEEKAELIPHLQWLQEQLPNAEVMPISAQQGHNLDALEAQIAKHLPENDHFFPEDQITDRSSRFLAAELVREKIMRQLGAELPYQITVEIEEFKQQGHVLHIHALILVERDGQKKIIIGDKGERIKRIGSEARKDMEVLFDSKVMLNLWVKVKGGWSDDERALRSLGYGDL.

One can recognise an Era-type G domain in the interval 10–178 (RCGYVAIVGR…EAQIAKHLPE (169 aa)). The G1 stretch occupies residues 18–25 (GRPNVGKS). Residue 18-25 (GRPNVGKS) coordinates GTP. The tract at residues 44-48 (QTTRH) is G2. Residues 65–68 (DTPG) form a G3 region. Residues 65–69 (DTPGM) and 127–130 (NKTD) each bind GTP. The interval 127–130 (NKTD) is G4. Residues 157-159 (ISA) are G5. Residues 201 to 285 (VREKIMRQLG…MLNLWVKVKG (85 aa)) enclose the KH type-2 domain.

Belongs to the TRAFAC class TrmE-Era-EngA-EngB-Septin-like GTPase superfamily. Era GTPase family. Monomer.

The protein localises to the cytoplasm. Its subcellular location is the cell inner membrane. An essential GTPase that binds both GDP and GTP, with rapid nucleotide exchange. Plays a role in 16S rRNA processing and 30S ribosomal subunit biogenesis and possibly also in cell cycle regulation and energy metabolism. The sequence is that of GTPase Era from Pseudomonas putida (strain ATCC 47054 / DSM 6125 / CFBP 8728 / NCIMB 11950 / KT2440).